A 406-amino-acid polypeptide reads, in one-letter code: Enoyl-[acyl-carrier-protein] reductase [NADH] (406 aa).

Residues Gly48–Phe53, Phe74–Glu75, Asp111–Ala112, and Ile140–Ala141 contribute to the NAD(+) site. Tyr226 is a substrate binding site. Tyr236 (proton donor) is an active-site residue. Residues Lys245 and Leu275–Thr277 each bind NAD(+).

Belongs to the TER reductase family. In terms of assembly, monomer.

The catalysed reaction is a 2,3-saturated acyl-[ACP] + NAD(+) = a (2E)-enoyl-[ACP] + NADH + H(+). It participates in lipid metabolism; fatty acid biosynthesis. Involved in the final reduction of the elongation cycle of fatty acid synthesis (FAS II). Catalyzes the reduction of a carbon-carbon double bond in an enoyl moiety that is covalently linked to an acyl carrier protein (ACP). The sequence is that of Enoyl-[acyl-carrier-protein] reductase [NADH] from Coxiella burnetii (strain RSA 331 / Henzerling II).